The following is a 266-amino-acid chain: Glucosamine-6-phosphate deaminase (266 aa).

The active-site Proton acceptor; for enolization step is the Asp-67. Residue Asn-139 is the For ring-opening step of the active site. Catalysis depends on His-141, which acts as the Proton acceptor; for ring-opening step. Glu-146 acts as the For ring-opening step in catalysis.

It belongs to the glucosamine/galactosamine-6-phosphate isomerase family. NagB subfamily. As to quaternary structure, homohexamer.

The catalysed reaction is alpha-D-glucosamine 6-phosphate + H2O = beta-D-fructose 6-phosphate + NH4(+). Its pathway is amino-sugar metabolism; N-acetylneuraminate degradation; D-fructose 6-phosphate from N-acetylneuraminate: step 5/5. In terms of biological role, catalyzes the reversible isomerization-deamination of glucosamine 6-phosphate (GlcN6P) to form fructose 6-phosphate (Fru6P) and ammonium ion. This is Glucosamine-6-phosphate deaminase from Marinomonas sp. (strain MWYL1).